Reading from the N-terminus, the 290-residue chain is Phosphoribosylaminoimidazole-succinocarboxamide synthase (290 aa).

It belongs to the SAICAR synthetase family.

The catalysed reaction is 5-amino-1-(5-phospho-D-ribosyl)imidazole-4-carboxylate + L-aspartate + ATP = (2S)-2-[5-amino-1-(5-phospho-beta-D-ribosyl)imidazole-4-carboxamido]succinate + ADP + phosphate + 2 H(+). The protein operates within purine metabolism; IMP biosynthesis via de novo pathway; 5-amino-1-(5-phospho-D-ribosyl)imidazole-4-carboxamide from 5-amino-1-(5-phospho-D-ribosyl)imidazole-4-carboxylate: step 1/2. The polypeptide is Phosphoribosylaminoimidazole-succinocarboxamide synthase (Haemophilus influenzae (strain PittGG)).